The primary structure comprises 276 residues: Sulfate transport system permease protein CysW (276 aa).

A run of 6 helical transmembrane segments spans residues 16 to 36 (LIAL…IAVF), 64 to 84 (VVMA…AAWV), 99 to 119 (VLDL…VLLY), 136 to 156 (IIFS…PFVA), 212 to 232 (FGAV…LPIF), and 242 to 262 (TEAA…TLVL). An ABC transmembrane type-1 domain is found at 60 to 267 (LQLTVVMALI…VTLVLKEILE (208 aa)).

It belongs to the binding-protein-dependent transport system permease family. CysTW subfamily. In terms of assembly, the complex is composed of two ATP-binding proteins (CysA), two transmembrane proteins (CysT and CysW) and a solute-binding protein (CysP).

Its subcellular location is the cell inner membrane. In terms of biological role, part of the ABC transporter complex CysAWTP (TC 3.A.1.6.1) involved in sulfate/thiosulfate import. Probably responsible for the translocation of the substrate across the membrane. The polypeptide is Sulfate transport system permease protein CysW (cysW) (Synechocystis sp. (strain ATCC 27184 / PCC 6803 / Kazusa)).